Here is a 315-residue protein sequence, read N- to C-terminus: p-hydroxyphenylacetate 3-hydroxylase, reductase component (315 aa).

Belongs to the non-flavoprotein flavin reductase family. As to quaternary structure, homodimer. The p-hydroxyphenylacetate 3-hydroxylase (HpaH) is composed of an oxygenase component C2 and a reductase component C1.

The enzyme catalyses a reduced flavin + NAD(+) = an oxidized flavin + NADH + 2 H(+). It participates in aromatic compound metabolism; 4-hydroxyphenylacetate degradation; pyruvate and succinate semialdehyde from 4-hydroxyphenylacetate: step 1/7. With respect to regulation, flavin concentrations greater than 15 uM do not inhibit the NADH oxidation activity of the reductase component C1 but do affect the hydroxylation activity of the C1-C2 complex. Maximal reductase activity is achieved only upon HPA binding to the reductase component C1 before interaction with NADH. HPA stimulates the rates of both the reduction of FMN and release of reduced FMN from the reductase component. In terms of biological role, reductase component of a two-component system that supplies reduced FMN (FMNH2) to the oxygenase component to catalyze the hydroxylation of 4-hydroxyphenylacetic acid, leading to the production of 3,4-dihydroxyphenylacetate (3,4-DHPA). Catalyzes the reduction of free flavins (FMN, FAD and riboflavin) by NADH. Subsequently, the reduced flavins diffuse to the oxygenase component C2. This is p-hydroxyphenylacetate 3-hydroxylase, reductase component from Acinetobacter baumannii.